Reading from the N-terminus, the 89-residue chain is UPF0367 protein PMM0124 (89 aa).

It belongs to the UPF0367 family.

The protein is UPF0367 protein PMM0124 of Prochlorococcus marinus subsp. pastoris (strain CCMP1986 / NIES-2087 / MED4).